A 359-amino-acid polypeptide reads, in one-letter code: Tropomodulin-1 (359 aa).

The interval 39 to 61 is disordered; that stretch reads PDNALLPAGLRQKDQTTKAPTGP. The interval 39-138 is tropomyosin-binding; the sequence is PDNALLPAGL…CDIAAILGMH (100 aa).

The protein belongs to the tropomodulin family. In terms of assembly, binds to the N-terminus of tropomyosin and to actin. Interacts with FLII.

It is found in the cytoplasm. It localises to the cytoskeleton. Its function is as follows. Blocks the elongation and depolymerization of the actin filaments at the pointed end. The Tmod/TM complex contributes to the formation of the short actin protofilament, which in turn defines the geometry of the membrane skeleton. May play an important role in regulating the organization of actin filaments by preferentially binding to a specific tropomyosin isoform at its N-terminus. In Bos taurus (Bovine), this protein is Tropomodulin-1 (TMOD1).